Consider the following 457-residue polypeptide: Argininosuccinate lyase (457 aa).

The protein belongs to the lyase 1 family. Argininosuccinate lyase subfamily.

The protein resides in the cytoplasm. It catalyses the reaction 2-(N(omega)-L-arginino)succinate = fumarate + L-arginine. Its pathway is amino-acid biosynthesis; L-arginine biosynthesis; L-arginine from L-ornithine and carbamoyl phosphate: step 3/3. In Escherichia coli O1:K1 / APEC, this protein is Argininosuccinate lyase.